A 497-amino-acid polypeptide reads, in one-letter code: Glycerol kinase (497 aa).

ADP is bound at residue T13. T13, T14, and S15 together coordinate ATP. A sn-glycerol 3-phosphate-binding site is contributed by T13. R17 contributes to the ADP binding site. Residues R83, E84, and Y135 each coordinate sn-glycerol 3-phosphate. Glycerol contacts are provided by R83, E84, and Y135. Position 231 is a phosphohistidine; by HPr (H231). Residue D245 coordinates sn-glycerol 3-phosphate. Residues D245 and Q246 each contribute to the glycerol site. Residues T267 and G310 each contribute to the ADP site. Residues T267, G310, Q314, and G411 each coordinate ATP. ADP contacts are provided by G411 and N415.

This sequence belongs to the FGGY kinase family. Homotetramer and homodimer (in equilibrium). Post-translationally, the phosphoenolpyruvate-dependent sugar phosphotransferase system (PTS), including enzyme I, and histidine-containing protein (HPr) are required for the phosphorylation, which leads to the activation of the enzyme.

The enzyme catalyses glycerol + ATP = sn-glycerol 3-phosphate + ADP + H(+). It participates in polyol metabolism; glycerol degradation via glycerol kinase pathway; sn-glycerol 3-phosphate from glycerol: step 1/1. Its activity is regulated as follows. Activated by phosphorylation and inhibited by fructose 1,6-bisphosphate (FBP). Functionally, key enzyme in the regulation of glycerol uptake and metabolism. Catalyzes the phosphorylation of glycerol to yield sn-glycerol 3-phosphate. The protein is Glycerol kinase of Listeria monocytogenes serotype 4a (strain HCC23).